Reading from the N-terminus, the 118-residue chain is Small ribosomal subunit protein uS13 (118 aa).

The tract at residues 91–118 is disordered; the sequence is HRRSLPVRGQRTKTNARTRKGPRKPIRK.

It belongs to the universal ribosomal protein uS13 family. As to quaternary structure, part of the 30S ribosomal subunit. Forms a loose heterodimer with protein S19. Forms two bridges to the 50S subunit in the 70S ribosome.

Located at the top of the head of the 30S subunit, it contacts several helices of the 16S rRNA. In the 70S ribosome it contacts the 23S rRNA (bridge B1a) and protein L5 of the 50S subunit (bridge B1b), connecting the 2 subunits; these bridges are implicated in subunit movement. Contacts the tRNAs in the A and P-sites. The polypeptide is Small ribosomal subunit protein uS13 (Marinomonas sp. (strain MWYL1)).